The sequence spans 115 residues: Tyrosine-protein phosphatase 18 (115 aa).

Residues 1–115 form the Tyrosine-protein phosphatase domain; sequence WLMIVEQKCR…ETGSDAPMVV (115 aa). Residue aspartate 83 coordinates substrate.

It belongs to the protein-tyrosine phosphatase family.

The catalysed reaction is O-phospho-L-tyrosyl-[protein] + H2O = L-tyrosyl-[protein] + phosphate. The polypeptide is Tyrosine-protein phosphatase 18 (STY-18) (Styela plicata (Wrinkled sea squirt)).